We begin with the raw amino-acid sequence, 272 residues long: MISIDSSAMQTEAVDLANLPAQDTALEIRNLDLRYGDKQALFDVSMKIPKKQVTAFIGPSGCGKSTLLRCINRMNDLVDSCKIEGEILLHGQNIYDKKVDVAALRRNVGMVFQRPNPFPKSIYENVVYGLRLQGLSNRRDLDEAAERSLRGAAIWDEVKDRLHDNAFGLSGGQQQRLVIARAIAIEPEVLLLDEPTSALDPISTLTIEELITELKQQYTVVIVTHNMQQAARVSDQTAFMYMGELVEYADTNTIFTTPKKRKTEDYITGRYG.

The 242-residue stretch at 26–267 (LEIRNLDLRY…PKKRKTEDYI (242 aa)) folds into the ABC transporter domain. Position 58–65 (58–65 (GPSGCGKS)) interacts with ATP.

This sequence belongs to the ABC transporter superfamily. Phosphate importer (TC 3.A.1.7) family. As to quaternary structure, the complex is composed of two ATP-binding proteins (PstB), two transmembrane proteins (PstC and PstA) and a solute-binding protein (PstS).

It is found in the cell inner membrane. It catalyses the reaction phosphate(out) + ATP + H2O = ADP + 2 phosphate(in) + H(+). Part of the ABC transporter complex PstSACB involved in phosphate import. Responsible for energy coupling to the transport system. This chain is Phosphate import ATP-binding protein PstB, found in Shewanella frigidimarina (strain NCIMB 400).